Consider the following 137-residue polypeptide: Large ribosomal subunit protein mL61 (137 aa).

The protein belongs to the mitochondrion-specific ribosomal protein mL61 family. In terms of assembly, component of the mitochondrial large ribosomal subunit (mt-LSU). Mature yeast 74S mitochondrial ribosomes consist of a small (37S) and a large (54S) subunit. The 37S small subunit contains a 15S ribosomal RNA (15S mt-rRNA) and 34 different proteins. The 54S large subunit contains a 21S rRNA (21S mt-rRNA) and 46 different proteins.

It is found in the mitochondrion. Component of the mitochondrial ribosome (mitoribosome), a dedicated translation machinery responsible for the synthesis of mitochondrial genome-encoded proteins, including at least some of the essential transmembrane subunits of the mitochondrial respiratory chain. The mitoribosomes are attached to the mitochondrial inner membrane and translation products are cotranslationally integrated into the membrane. mL61 is not essential in cells grown at 30 degrees Celsius but is required for mitochondrial translation in cells grown at 18 degrees Celsius. The polypeptide is Large ribosomal subunit protein mL61 (MRP49) (Saccharomyces cerevisiae (strain ATCC 204508 / S288c) (Baker's yeast)).